The chain runs to 44 residues: MSHTMGKNNREAKEKKGQPEPLSGSHKVKNRNHSRQKHHAHHDM.

Positions 1-44 are disordered; that stretch reads MSHTMGKNNREAKEKKGQPEPLSGSHKVKNRNHSRQKHHAHHDM. The span at 8 to 18 shows a compositional bias: basic and acidic residues; sequence NNREAKEKKGQ. Residues 26 to 44 are compositionally biased toward basic residues; that stretch reads HKVKNRNHSRQKHHAHHDM.

The protein belongs to the SspP family.

It localises to the spore core. This is Small, acid-soluble spore protein P from Bacillus cereus (strain ATCC 14579 / DSM 31 / CCUG 7414 / JCM 2152 / NBRC 15305 / NCIMB 9373 / NCTC 2599 / NRRL B-3711).